Here is a 342-residue protein sequence, read N- to C-terminus: Flap endonuclease 1 (342 aa).

The segment at methionine 1–arginine 99 is N-domain. Aspartate 28, aspartate 81, glutamate 153, glutamate 155, aspartate 174, aspartate 176, and aspartate 237 together coordinate Mg(2+). The I-domain stretch occupies residues glutamate 117–lysine 259.

Belongs to the XPG/RAD2 endonuclease family. FEN1 subfamily. As to quaternary structure, interacts with PCNA. PCNA stimulates the nuclease activity without altering cleavage specificity. The cofactor is Mg(2+).

Functionally, structure-specific nuclease with 5'-flap endonuclease and 5'-3' exonuclease activities involved in DNA replication and repair. During DNA replication, cleaves the 5'-overhanging flap structure that is generated by displacement synthesis when DNA polymerase encounters the 5'-end of a downstream Okazaki fragment. Binds the unpaired 3'-DNA end and kinks the DNA to facilitate 5' cleavage specificity. Cleaves one nucleotide into the double-stranded DNA from the junction in flap DNA, leaving a nick for ligation. Also involved in the base excision repair (BER) pathway. Acts as a genome stabilization factor that prevents flaps from equilibrating into structures that lead to duplications and deletions. Also possesses 5'-3' exonuclease activity on nicked or gapped double-stranded DNA. The protein is Flap endonuclease 1 of Korarchaeum cryptofilum (strain OPF8).